A 192-amino-acid chain; its full sequence is Peptidyl-tRNA hydrolase (192 aa).

Position 18 (Tyr18) interacts with tRNA. Residue His23 is the Proton acceptor of the active site. TRNA contacts are provided by Phe69, Asn71, and Asn117.

The protein belongs to the PTH family. In terms of assembly, monomer.

It localises to the cytoplasm. The enzyme catalyses an N-acyl-L-alpha-aminoacyl-tRNA + H2O = an N-acyl-L-amino acid + a tRNA + H(+). Functionally, hydrolyzes ribosome-free peptidyl-tRNAs (with 1 or more amino acids incorporated), which drop off the ribosome during protein synthesis, or as a result of ribosome stalling. Catalyzes the release of premature peptidyl moieties from peptidyl-tRNA molecules trapped in stalled 50S ribosomal subunits, and thus maintains levels of free tRNAs and 50S ribosomes. The sequence is that of Peptidyl-tRNA hydrolase from Neisseria meningitidis serogroup A / serotype 4A (strain DSM 15465 / Z2491).